Consider the following 306-residue polypeptide: Porphobilinogen deaminase (306 aa).

An S-(dipyrrolylmethanemethyl)cysteine modification is found at cysteine 239.

This sequence belongs to the HMBS family. As to quaternary structure, monomer. Dipyrromethane is required as a cofactor.

The catalysed reaction is 4 porphobilinogen + H2O = hydroxymethylbilane + 4 NH4(+). The protein operates within porphyrin-containing compound metabolism; protoporphyrin-IX biosynthesis; coproporphyrinogen-III from 5-aminolevulinate: step 2/4. Tetrapolymerization of the monopyrrole PBG into the hydroxymethylbilane pre-uroporphyrinogen in several discrete steps. The protein is Porphobilinogen deaminase of Helicobacter pylori (strain HPAG1).